Consider the following 612-residue polypeptide: 1,8-cineole synthase, chloroplastic (612 aa).

Residues 1-52 (MALVSGAPLASRSCLNKSLISSTHELKPLRRTILPTLRWKSATPSINMCLTT) constitute a chloroplast transit peptide. Mg(2+)-binding residues include aspartate 363, aspartate 367, and aspartate 515. The DDXXD motif motif lies at 363–367 (DDIYD).

Belongs to the terpene synthase family. Tpsd subfamily. Requires Mg(2+) as cofactor. The cofactor is Mn(2+).

It localises to the plastid. The protein resides in the chloroplast. The catalysed reaction is (2E)-geranyl diphosphate + H2O = 1,8-cineole + diphosphate. The protein operates within terpene metabolism; oleoresin biosynthesis. In terms of biological role, terpene synthase (TPS) involved in the biosynthesis of monoterpene natural products included in conifer oleoresin secretions and volatile emissions; these compounds contribute to biotic and abiotic stress defense against herbivores and pathogens. Catalyzes the conversion of (2E)-geranyl diphosphate (GPP) to 1,8-cineole. This chain is 1,8-cineole synthase, chloroplastic, found in Picea engelmannii x Picea glauca (Hybrid white spruce).